The sequence spans 458 residues: Morphogenetic regulator of filamentous growth protein 1 (458 aa).

The segment at 401–458 (KKDSGSEPLHAKRRRNSGISPRTTTLGPNGNSNTSNEELPTSDVNDINKDMTKKKMKF) is disordered. Positions 417–445 (SGISPRTTTLGPNGNSNTSNEELPTSDVN) are enriched in polar residues. Positions 446-458 (DINKDMTKKKMKF) are enriched in basic and acidic residues.

This sequence belongs to the MFG1 family. Interacts with FLO8 and MSS11, both morphogenetic transcription factors binding directly to the FLO11 promoter.

It is found in the nucleus. Its function is as follows. Transcriptional regulator with a general role in all morphogenetically distinct forms of filamentous growth, namely haploid invasive growth, biofilm formation, and diploid pseudohyphal growth. May control FLO11 gene expression as part of a promoter-bound complex with FLO8 and MSS1. The polypeptide is Morphogenetic regulator of filamentous growth protein 1 (MFG1) (Saccharomyces cerevisiae (strain ATCC 204508 / S288c) (Baker's yeast)).